Here is a 210-residue protein sequence, read N- to C-terminus: MAEPRRKKRPSKLQDTLVYGLVWLACFAPLAWLAWRGYAGELGANPIDKLIRELGEWGLRLLLVGLAITPAARILKMPRLVRFRRTVGLFAFAYVALHLLAYVGIDLFFDWNQLWKDILKRPFITLGMLGFMLLIPLAVTSTNGWVIRMGRAAWSRLHRLVYLIVPLGVAHYYLLVKADHRPPIIYGAVFVALMLWRVWEGRRTASKSSP.

Transmembrane regions (helical) follow at residues 15 to 35 (DTLV…WLAW), 89 to 109 (LFAF…DLFF), 122 to 142 (PFIT…VTST), and 160 to 180 (LVYL…KADH).

This sequence belongs to the MsrQ family. In terms of assembly, heterodimer of a catalytic subunit (MsrP) and a heme-binding subunit (MsrQ). Requires FMN as cofactor. Heme b serves as cofactor.

It is found in the cell inner membrane. Part of the MsrPQ system that repairs oxidized periplasmic proteins containing methionine sulfoxide residues (Met-O), using respiratory chain electrons. Thus protects these proteins from oxidative-stress damage caused by reactive species of oxygen and chlorine generated by the host defense mechanisms. MsrPQ is essential for the maintenance of envelope integrity under bleach stress, rescuing a wide series of structurally unrelated periplasmic proteins from methionine oxidation. MsrQ provides electrons for reduction to the reductase catalytic subunit MsrP, using the quinone pool of the respiratory chain. This chain is Protein-methionine-sulfoxide reductase heme-binding subunit MsrQ, found in Caulobacter vibrioides (strain ATCC 19089 / CIP 103742 / CB 15) (Caulobacter crescentus).